Consider the following 362-residue polypeptide: Mannose-1-phosphate guanyltransferase (362 aa).

Belongs to the transferase hexapeptide repeat family.

The protein resides in the cytoplasm. It catalyses the reaction alpha-D-mannose 1-phosphate + GTP + H(+) = GDP-alpha-D-mannose + diphosphate. Its pathway is nucleotide-sugar biosynthesis; GDP-alpha-D-mannose biosynthesis; GDP-alpha-D-mannose from alpha-D-mannose 1-phosphate (GTP route): step 1/1. Involved in cell wall synthesis where it is required for glycosylation. Involved in cell cycle progression through cell-size checkpoint. This is Mannose-1-phosphate guanyltransferase (MPG1) from Debaryomyces hansenii (strain ATCC 36239 / CBS 767 / BCRC 21394 / JCM 1990 / NBRC 0083 / IGC 2968) (Yeast).